The chain runs to 264 residues: Indole-3-glycerol phosphate synthase (264 aa).

Belongs to the TrpC family.

The enzyme catalyses 1-(2-carboxyphenylamino)-1-deoxy-D-ribulose 5-phosphate + H(+) = (1S,2R)-1-C-(indol-3-yl)glycerol 3-phosphate + CO2 + H2O. The protein operates within amino-acid biosynthesis; L-tryptophan biosynthesis; L-tryptophan from chorismate: step 4/5. The chain is Indole-3-glycerol phosphate synthase from Carboxydothermus hydrogenoformans (strain ATCC BAA-161 / DSM 6008 / Z-2901).